Consider the following 127-residue polypeptide: Vacuolar ATPase assembly integral membrane protein VMA21 (127 aa).

The segment at methionine 1–leucine 28 is disordered. Topologically, residues methionine 1 to glutamine 45 are cytoplasmic. Residues valine 46–phenylalanine 66 traverse the membrane as a helical segment. The Lumenal segment spans residues tyrosine 67 to tyrosine 79. The chain crosses the membrane as a helical span at residues alanine 80 to methionine 100. The Cytoplasmic segment spans residues arginine 101–lysine 127. The interval glutamine 107–lysine 127 is disordered. A compositionally biased stretch (basic and acidic residues) spans glycine 118 to lysine 127. Positions lysine 124–lysine 127 match the Prevents secretion from ER motif.

This sequence belongs to the VMA21 family.

The protein resides in the endoplasmic reticulum membrane. It is found in the endoplasmic reticulum-Golgi intermediate compartment membrane. Its subcellular location is the cytoplasmic vesicle. It localises to the COPII-coated vesicle membrane. Its function is as follows. Required for the assembly of the V0 complex of the vacuolar ATPase (V-ATPase) in the endoplasmic reticulum. This is Vacuolar ATPase assembly integral membrane protein VMA21 from Coccidioides immitis (strain RS) (Valley fever fungus).